The chain runs to 242 residues: Protein GrpE (242 aa).

Disordered stretches follow at residues 1-75 (MSDD…DDEL) and 93-136 (VADL…QQIK). Positions 23-37 (DAESSAAEDASAADD) are enriched in low complexity. The segment covering 38-49 (AAPEESTGDEQA) has biased composition (acidic residues). The segment covering 50-64 (GETTAESSDAESVTV) has biased composition (polar residues). Acidic residues predominate over residues 96–108 (LETERDEAEETAS). The span at 124–133 (YKKRAKKRQQ) shows a compositional bias: basic residues.

Belongs to the GrpE family. As to quaternary structure, homodimer.

The protein resides in the cytoplasm. Functionally, participates actively in the response to hyperosmotic and heat shock by preventing the aggregation of stress-denatured proteins, in association with DnaK and GrpE. It is the nucleotide exchange factor for DnaK and may function as a thermosensor. Unfolded proteins bind initially to DnaJ; upon interaction with the DnaJ-bound protein, DnaK hydrolyzes its bound ATP, resulting in the formation of a stable complex. GrpE releases ADP from DnaK; ATP binding to DnaK triggers the release of the substrate protein, thus completing the reaction cycle. Several rounds of ATP-dependent interactions between DnaJ, DnaK and GrpE are required for fully efficient folding. This is Protein GrpE from Haloferax mediterranei (strain ATCC 33500 / DSM 1411 / JCM 8866 / NBRC 14739 / NCIMB 2177 / R-4) (Halobacterium mediterranei).